Reading from the N-terminus, the 225-residue chain is Uracil phosphoribosyltransferase (225 aa).

Lysine 36 to arginine 40 is a GTP binding site. 5-phospho-alpha-D-ribose 1-diphosphate contacts are provided by residues arginine 86, arginine 111, and aspartate 145–threonine 153. Residues isoleucine 210 and glycine 215 to alanine 217 each bind uracil. Residue aspartate 216 participates in 5-phospho-alpha-D-ribose 1-diphosphate binding.

This sequence belongs to the UPRTase family. It depends on Mg(2+) as a cofactor.

The catalysed reaction is UMP + diphosphate = 5-phospho-alpha-D-ribose 1-diphosphate + uracil. It participates in pyrimidine metabolism; UMP biosynthesis via salvage pathway; UMP from uracil: step 1/1. Allosterically activated by GTP. Functionally, catalyzes the conversion of uracil and 5-phospho-alpha-D-ribose 1-diphosphate (PRPP) to UMP and diphosphate. The polypeptide is Uracil phosphoribosyltransferase (Haloarcula marismortui (strain ATCC 43049 / DSM 3752 / JCM 8966 / VKM B-1809) (Halobacterium marismortui)).